The following is a 506-amino-acid chain: RNA-splicing ligase RtcB homolog (506 aa).

The Mn(2+) site is built by Asp120, Cys123, His228, His260, and His354. Position 227–231 (227–231 (NHYAE)) interacts with GMP. Residues 354–355 (HN), 403–406 (GGSM), Ser410, 429–432 (HGAG), and Lys505 each bind GMP. The active-site GMP-histidine intermediate is His429.

The protein belongs to the RtcB family. As to quaternary structure, catalytic component of the tRNA-splicing ligase complex. Requires Mn(2+) as cofactor.

The enzyme catalyses a 3'-end 3'-phospho-ribonucleotide-RNA + a 5'-end dephospho-ribonucleoside-RNA + GTP = a ribonucleotidyl-ribonucleotide-RNA + GMP + diphosphate. It carries out the reaction a 3'-end 2',3'-cyclophospho-ribonucleotide-RNA + a 5'-end dephospho-ribonucleoside-RNA + GTP + H2O = a ribonucleotidyl-ribonucleotide-RNA + GMP + diphosphate + H(+). Its function is as follows. Catalytic subunit of the tRNA-splicing ligase complex that acts by directly joining spliced tRNA halves to mature-sized tRNAs by incorporating the precursor-derived splice junction phosphate into the mature tRNA as a canonical 3',5'-phosphodiester. May act as an RNA ligase with broad substrate specificity, and may function toward other RNAs. This chain is RNA-splicing ligase RtcB homolog, found in Anopheles gambiae (African malaria mosquito).